The sequence spans 61 residues: Sperm protamine P1 (61 aa).

The tract at residues 1–61 (MARYRHSRSR…RYSRRRRRRY (61 aa)) is disordered.

The protein belongs to the protamine P1 family. As to expression, testis.

Its subcellular location is the nucleus. The protein resides in the chromosome. Functionally, protamines substitute for histones in the chromatin of sperm during the haploid phase of spermatogenesis. They compact sperm DNA into a highly condensed, stable and inactive complex. The chain is Sperm protamine P1 (PRM1) from Onychogalea fraenata (Bridled nail-tailed wallaby).